We begin with the raw amino-acid sequence, 302 residues long: Sulfate adenylyltransferase subunit 2 (302 aa).

Residues 280–302 (RQGRVIDHDQAGSMEQKKREGYF) form a disordered region.

Belongs to the PAPS reductase family. CysD subfamily. In terms of assembly, heterodimer composed of CysD, the smaller subunit, and CysN.

It catalyses the reaction sulfate + ATP + H(+) = adenosine 5'-phosphosulfate + diphosphate. It functions in the pathway sulfur metabolism; hydrogen sulfide biosynthesis; sulfite from sulfate: step 1/3. Its function is as follows. With CysN forms the ATP sulfurylase (ATPS) that catalyzes the adenylation of sulfate producing adenosine 5'-phosphosulfate (APS) and diphosphate, the first enzymatic step in sulfur assimilation pathway. APS synthesis involves the formation of a high-energy phosphoric-sulfuric acid anhydride bond driven by GTP hydrolysis by CysN coupled to ATP hydrolysis by CysD. This chain is Sulfate adenylyltransferase subunit 2, found in Hahella chejuensis (strain KCTC 2396).